A 165-amino-acid chain; its full sequence is Nucleotide-binding protein P9515_05441 (165 aa).

The protein belongs to the YajQ family.

Functionally, nucleotide-binding protein. This Prochlorococcus marinus (strain MIT 9515) protein is Nucleotide-binding protein P9515_05441.